Here is a 651-residue protein sequence, read N- to C-terminus: J domain-containing protein required for chloroplast accumulation response 1 (651 aa).

Over residues Met-1–Ala-17 the composition is skewed to polar residues. Disordered regions lie at residues Met-1–Ser-56, Gly-114–Leu-138, Leu-156–Asp-176, Lys-250–Lys-291, and Lys-308–Pro-526. Ser-56 bears the Phosphoserine mark. Residues Ser-126 to Ser-137 are compositionally biased toward low complexity. Basic and acidic residues-rich tracts occupy residues Lys-250–Gly-259, Thr-281–Lys-291, Ile-337–Lys-357, Val-405–Asp-416, Arg-441–Asn-456, and Gln-488–Met-497. Residues Asp-532–Lys-562 adopt a coiled-coil conformation. The region spanning Ser-586 to Val-651 is the J domain.

In terms of tissue distribution, expressed in leaves and stems, but not in roots.

The protein localises to the cytoplasm. Required for chloroplast photorelocation movement; chloroplast accumulation upon low blue light and for chloroplast movement to the bottom of cells in darkness, by modulating chloroplast actin (Cp-actin) filaments distribution, appearance and disappearance. May mediate a slight resistance to aluminum in root hair cells. This is J domain-containing protein required for chloroplast accumulation response 1 (JAC1) from Arabidopsis thaliana (Mouse-ear cress).